A 356-amino-acid chain; its full sequence is Alanine racemase, catabolic (356 aa).

Lys-35 functions as the Proton acceptor; specific for D-alanine in the catalytic mechanism. Lys-35 bears the N6-(pyridoxal phosphate)lysine mark. Position 130 (Arg-130) interacts with substrate. Catalysis depends on Tyr-253, which acts as the Proton acceptor; specific for L-alanine. Met-301 contributes to the substrate binding site.

The protein belongs to the alanine racemase family. The cofactor is pyridoxal 5'-phosphate.

It carries out the reaction L-alanine = D-alanine. Its function is as follows. Isomerizes L-alanine to D-alanine which is then oxidized to pyruvate by DadA. This chain is Alanine racemase, catabolic (dadX), found in Escherichia coli O157:H7.